The primary structure comprises 238 residues: 1-(5-phosphoribosyl)-5-[(5-phosphoribosylamino)methylideneamino] imidazole-4-carboxamide isomerase (238 aa).

D8 serves as the catalytic Proton acceptor. Residue D130 is the Proton donor of the active site.

Belongs to the HisA/HisF family.

It is found in the cytoplasm. It catalyses the reaction 1-(5-phospho-beta-D-ribosyl)-5-[(5-phospho-beta-D-ribosylamino)methylideneamino]imidazole-4-carboxamide = 5-[(5-phospho-1-deoxy-D-ribulos-1-ylimino)methylamino]-1-(5-phospho-beta-D-ribosyl)imidazole-4-carboxamide. It functions in the pathway amino-acid biosynthesis; L-histidine biosynthesis; L-histidine from 5-phospho-alpha-D-ribose 1-diphosphate: step 4/9. The chain is 1-(5-phosphoribosyl)-5-[(5-phosphoribosylamino)methylideneamino] imidazole-4-carboxamide isomerase from Methanococcus maripaludis (strain C5 / ATCC BAA-1333).